Here is a 423-residue protein sequence, read N- to C-terminus: Histidine--tRNA ligase (423 aa).

This sequence belongs to the class-II aminoacyl-tRNA synthetase family. In terms of assembly, homodimer.

The protein resides in the cytoplasm. The enzyme catalyses tRNA(His) + L-histidine + ATP = L-histidyl-tRNA(His) + AMP + diphosphate + H(+). This is Histidine--tRNA ligase from Haemophilus influenzae (strain PittEE).